Consider the following 804-residue polypeptide: DNA gyrase subunit A (804 aa).

Residues 31-495 form the Topo IIA-type catalytic domain; sequence IPDVRDGLKP…QSIEYNEEEL (465 aa). Residue Y119 is the O-(5'-phospho-DNA)-tyrosine intermediate of the active site. The short motif at 522–528 is the GyrA-box element; sequence QKRGGKG.

Belongs to the type II topoisomerase GyrA/ParC subunit family. In terms of assembly, heterotetramer, composed of two GyrA and two GyrB chains. In the heterotetramer, GyrA contains the active site tyrosine that forms a transient covalent intermediate with DNA, while GyrB binds cofactors and catalyzes ATP hydrolysis.

It localises to the cytoplasm. The enzyme catalyses ATP-dependent breakage, passage and rejoining of double-stranded DNA.. In terms of biological role, a type II topoisomerase that negatively supercoils closed circular double-stranded (ds) DNA in an ATP-dependent manner to modulate DNA topology and maintain chromosomes in an underwound state. Negative supercoiling favors strand separation, and DNA replication, transcription, recombination and repair, all of which involve strand separation. Also able to catalyze the interconversion of other topological isomers of dsDNA rings, including catenanes and knotted rings. Type II topoisomerases break and join 2 DNA strands simultaneously in an ATP-dependent manner. In Thermotoga maritima (strain ATCC 43589 / DSM 3109 / JCM 10099 / NBRC 100826 / MSB8), this protein is DNA gyrase subunit A.